Here is an 861-residue protein sequence, read N- to C-terminus: Bifunctional uridylyltransferase/uridylyl-removing enzyme (861 aa).

The interval 1–321 (MKNDNRIIKN…VYHQKQKIIR (321 aa)) is uridylyltransferase. Residues 322-678 (LDDEFQLSNR…IMPHHSQGGT (357 aa)) are uridylyl-removing. Residues 440–562 (VDQHTLFVIR…LPHAKYLDYL (123 aa)) enclose the HD domain. ACT domains lie at 679-760 (EVFI…AVSR) and 788-861 (QLFL…KSKY).

It belongs to the GlnD family. The cofactor is Mg(2+).

The enzyme catalyses [protein-PII]-L-tyrosine + UTP = [protein-PII]-uridylyl-L-tyrosine + diphosphate. It carries out the reaction [protein-PII]-uridylyl-L-tyrosine + H2O = [protein-PII]-L-tyrosine + UMP + H(+). With respect to regulation, uridylyltransferase (UTase) activity is inhibited by glutamine, while glutamine activates uridylyl-removing (UR) activity. Modifies, by uridylylation and deuridylylation, the PII regulatory proteins (GlnB and homologs), in response to the nitrogen status of the cell that GlnD senses through the glutamine level. Under low glutamine levels, catalyzes the conversion of the PII proteins and UTP to PII-UMP and PPi, while under higher glutamine levels, GlnD hydrolyzes PII-UMP to PII and UMP (deuridylylation). Thus, controls uridylylation state and activity of the PII proteins, and plays an important role in the regulation of nitrogen assimilation and metabolism. The sequence is that of Bifunctional uridylyltransferase/uridylyl-removing enzyme from Legionella pneumophila (strain Lens).